The chain runs to 301 residues: Probable alpha-L-glutamate ligase 1 (301 aa).

In terms of domain architecture, ATP-grasp spans Leu-104 to Glu-287. ATP contacts are provided by residues Lys-141, Glu-178 to Tyr-179, Asp-187, and Arg-211 to Asn-213. Mg(2+)-binding residues include Asp-248, Glu-260, and Asn-262. Mn(2+) contacts are provided by Asp-248, Glu-260, and Asn-262.

Belongs to the RimK family. Requires Mg(2+) as cofactor. Mn(2+) is required as a cofactor.

The sequence is that of Probable alpha-L-glutamate ligase 1 from Shewanella sp. (strain MR-4).